The following is a 631-amino-acid chain: Phosphomethylpyrimidine synthase (631 aa).

The segment at 54 to 80 (TLVGGDKDKPRYETNEPIPVYDTSGPY) is disordered. Over residues 58 to 67 (GDKDKPRYET) the composition is skewed to basic and acidic residues. Substrate-binding positions include Asn-239, Met-268, Tyr-297, His-333, 353-355 (SRG), 394-397 (DGLR), and Glu-433. His-437 serves as a coordination point for Zn(2+). Tyr-460 is a substrate binding site. His-501 contributes to the Zn(2+) binding site. Residues Cys-581, Cys-584, and Cys-589 each contribute to the [4Fe-4S] cluster site.

This sequence belongs to the ThiC family. Homodimer. The cofactor is [4Fe-4S] cluster.

It catalyses the reaction 5-amino-1-(5-phospho-beta-D-ribosyl)imidazole + S-adenosyl-L-methionine = 4-amino-2-methyl-5-(phosphooxymethyl)pyrimidine + CO + 5'-deoxyadenosine + formate + L-methionine + 3 H(+). Its pathway is cofactor biosynthesis; thiamine diphosphate biosynthesis. Its function is as follows. Catalyzes the synthesis of the hydroxymethylpyrimidine phosphate (HMP-P) moiety of thiamine from aminoimidazole ribotide (AIR) in a radical S-adenosyl-L-methionine (SAM)-dependent reaction. The sequence is that of Phosphomethylpyrimidine synthase from Klebsiella pneumoniae subsp. pneumoniae (strain ATCC 700721 / MGH 78578).